Here is a 320-residue protein sequence, read N- to C-terminus: ATP-dependent 6-phosphofructokinase (320 aa).

ATP is bound at residue Gly12. Residues 22 to 26 (RGVVR) and 55 to 60 (RYSVSD) each bind ADP. ATP contacts are provided by residues 73–74 (RF) and 103–106 (GDGS). Mg(2+) is bound at residue Asp104. 126–128 (TID) contributes to the substrate binding site. Asp128 functions as the Proton acceptor in the catalytic mechanism. Arg155 contacts ADP. Substrate-binding positions include Arg163 and 170 to 172 (MGR). Residues 186–188 (GCE), Lys212, and 214–216 (KKH) contribute to the ADP site. Substrate contacts are provided by residues Glu223, Arg244, and 250–253 (HIQR).

Belongs to the phosphofructokinase type A (PFKA) family. ATP-dependent PFK group I subfamily. Prokaryotic clade 'B1' sub-subfamily. As to quaternary structure, homotetramer. Mg(2+) serves as cofactor.

It localises to the cytoplasm. It carries out the reaction beta-D-fructose 6-phosphate + ATP = beta-D-fructose 1,6-bisphosphate + ADP + H(+). It participates in carbohydrate degradation; glycolysis; D-glyceraldehyde 3-phosphate and glycerone phosphate from D-glucose: step 3/4. Allosterically activated by ADP and other diphosphonucleosides, and allosterically inhibited by phosphoenolpyruvate. In terms of biological role, catalyzes the phosphorylation of D-fructose 6-phosphate to fructose 1,6-bisphosphate by ATP, the first committing step of glycolysis. The polypeptide is ATP-dependent 6-phosphofructokinase (Salmonella agona (strain SL483)).